A 430-amino-acid polypeptide reads, in one-letter code: MSSIVAIKGFNDVLPTQTAAWRRLEQHLASLMDAYGYQQIRLPIVEQTGLFKRAIGDATDIVEKEMYTFFDKGNPPESLTLRPEGTAGCVRALVEHNLLRGATPRVWYMGPMFRYEKPQKGRYRQFHQFGVETFGVATPDIDAELIMLTARLWKRMGVDHMVQLELNTLGETDERTEYRNALVAFLNEHKDALDEDSQRRLTTNPLRILDSKIESTQKILENAPKLHDFLKEDSLSHFQQLQDYLTAAGIKFVINQKLVRGLDYYNKTVFEWTTTALGSQGTVCAGGRYDGLVGQLKGKADQSVPAVGFAMGMERLLLLLEQVEQAEIVRDCEAFLVAEPAYQSKALVLAEQLRDQLEAANSNIRIKTGSQGSMKSQMKKADQAGAVYAIILGEREWEAQQLAVKELATAEQSQVALAELVPFLIEKFTK.

It belongs to the class-II aminoacyl-tRNA synthetase family. Homodimer.

The protein resides in the cytoplasm. The enzyme catalyses tRNA(His) + L-histidine + ATP = L-histidyl-tRNA(His) + AMP + diphosphate + H(+). The polypeptide is Histidine--tRNA ligase (Acinetobacter baumannii (strain AB307-0294)).